We begin with the raw amino-acid sequence, 193 residues long: Xanthine phosphoribosyltransferase (193 aa).

The xanthine site is built by Leu20 and Thr27. Residue 128–132 coordinates 5-phospho-alpha-D-ribose 1-diphosphate; that stretch reads ANGQA. Lys156 provides a ligand contact to xanthine.

This sequence belongs to the purine/pyrimidine phosphoribosyltransferase family. Xpt subfamily. As to quaternary structure, homodimer.

The protein localises to the cytoplasm. It carries out the reaction XMP + diphosphate = xanthine + 5-phospho-alpha-D-ribose 1-diphosphate. It functions in the pathway purine metabolism; XMP biosynthesis via salvage pathway; XMP from xanthine: step 1/1. Converts the preformed base xanthine, a product of nucleic acid breakdown, to xanthosine 5'-monophosphate (XMP), so it can be reused for RNA or DNA synthesis. The chain is Xanthine phosphoribosyltransferase from Streptococcus pneumoniae (strain P1031).